Here is a 313-residue protein sequence, read N- to C-terminus: Undecaprenyl-diphosphatase (313 aa).

Transmembrane regions (helical) follow at residues 121 to 141 (YRIG…GFLF), 152 to 172 (LWLV…AEHY), 187 to 207 (GLVM…RSGA), 225 to 245 (FSFL…LPDA), 259 to 279 (QLLV…AWLL), and 290 to 310 (FVGY…AGVI).

The protein belongs to the UppP family.

It localises to the cell membrane. The catalysed reaction is di-trans,octa-cis-undecaprenyl diphosphate + H2O = di-trans,octa-cis-undecaprenyl phosphate + phosphate + H(+). Its function is as follows. Catalyzes the dephosphorylation of undecaprenyl diphosphate (UPP). Confers resistance to bacitracin. This Nocardia farcinica (strain IFM 10152) protein is Undecaprenyl-diphosphatase.